A 343-amino-acid polypeptide reads, in one-letter code: Sulfate/thiosulfate import ATP-binding protein CysA (343 aa).

Positions 3-233 constitute an ABC transporter domain; it reads ILIENISKTF…PATPFVMGFM (231 aa). 35-42 is an ATP binding site; sequence GPSGSGKS.

This sequence belongs to the ABC transporter superfamily. Sulfate/tungstate importer (TC 3.A.1.6) family.

It is found in the plastid. Its subcellular location is the chloroplast. It catalyses the reaction sulfate(out) + ATP + H2O = sulfate(in) + ADP + phosphate + H(+). It carries out the reaction thiosulfate(out) + ATP + H2O = thiosulfate(in) + ADP + phosphate + H(+). Its function is as follows. Part of the ABC transporter complex involved in sulfate/thiosulfate import. Responsible for energy coupling to the transport system. The protein is Sulfate/thiosulfate import ATP-binding protein CysA of Nephroselmis olivacea (Green alga).